Here is a 650-residue protein sequence, read N- to C-terminus: Chaperone protein DnaK (650 aa).

A Phosphothreonine; by autocatalysis modification is found at threonine 200. The segment covering 611–636 has biased composition (low complexity); it reads AQQAGAAGAAGAAEGAAHAGGAQQAA. Residues 611-637 are disordered; it reads AQQAGAAGAAGAAEGAAHAGGAQQAAD.

The protein belongs to the heat shock protein 70 family.

Functionally, acts as a chaperone. In Burkholderia ambifaria (strain MC40-6), this protein is Chaperone protein DnaK.